Consider the following 103-residue polypeptide: Small ribosomal subunit protein uS10 (103 aa).

The protein belongs to the universal ribosomal protein uS10 family. In terms of assembly, part of the 30S ribosomal subunit.

In terms of biological role, involved in the binding of tRNA to the ribosomes. In Syntrophobacter fumaroxidans (strain DSM 10017 / MPOB), this protein is Small ribosomal subunit protein uS10.